Here is a 431-residue protein sequence, read N- to C-terminus: Na(+)-translocating NADH-quinone reductase subunit F (431 aa).

Residues 10–30 (IFVASAAFCSLGLILVAVILL) form a helical membrane-spanning segment. Residues 41-133 (CKLKINNDDS…DLCLEVEERY (93 aa)) enclose the 2Fe-2S ferredoxin-type domain. [2Fe-2S] cluster-binding residues include cysteine 76, cysteine 82, cysteine 85, and cysteine 117. The FAD-binding FR-type domain maps to 136–286 (ASSWEGTVVS…SGPYGESFMK (151 aa)). The interval 289–413 (NRPVIFLIGG…ALHNSSILTL (125 aa)) is catalytic.

The protein belongs to the NqrF family. Composed of six subunits; NqrA, NqrB, NqrC, NqrD, NqrE and NqrF. [2Fe-2S] cluster serves as cofactor. Requires FAD as cofactor.

It localises to the cell inner membrane. The enzyme catalyses a ubiquinone + n Na(+)(in) + NADH + H(+) = a ubiquinol + n Na(+)(out) + NAD(+). In terms of biological role, NQR complex catalyzes the reduction of ubiquinone-1 to ubiquinol by two successive reactions, coupled with the transport of Na(+) ions from the cytoplasm to the periplasm. The first step is catalyzed by NqrF, which accepts electrons from NADH and reduces ubiquinone-1 to ubisemiquinone by a one-electron transfer pathway. The polypeptide is Na(+)-translocating NADH-quinone reductase subunit F (Chlamydia trachomatis serovar D (strain ATCC VR-885 / DSM 19411 / UW-3/Cx)).